A 50-amino-acid polypeptide reads, in one-letter code: MARYRCCRSQSRSRCYRQRRRGRRRRRRTCRRRRASRCCRRRYKLTCRRY.

It belongs to the protamine P1 family. Cross-linked by interchain disulfide bonds around the DNA-helix. As to expression, testis.

The protein resides in the nucleus. It is found in the chromosome. Protamines substitute for histones in the chromatin of sperm during the haploid phase of spermatogenesis. They compact sperm DNA into a highly condensed, stable and inactive complex. The protein is Sperm protamine P1 (PRM1) of Saguinus imperator (Emperor tamarin).